The chain runs to 350 residues: GTPase Obg (350 aa).

Residues 1 to 159 (MKLVDEAEIE…RTLKLELKLL (159 aa)) form the Obg domain. Residues 126 to 147 (GNMHFKSSTNRSPRQALPGEPG) are disordered. One can recognise an OBG-type G domain in the interval 160 to 337 (ADVGLLGFPN…IMSRIMAFFD (178 aa)). Residues 166–173 (GFPNAGKS), 191–195 (FTTLY), 213–216 (DIPG), 287–290 (NKAD), and 318–320 (SAL) each bind GTP. Mg(2+) contacts are provided by S173 and T193.

Belongs to the TRAFAC class OBG-HflX-like GTPase superfamily. OBG GTPase family. Monomer. The cofactor is Mg(2+).

It localises to the cytoplasm. In terms of biological role, an essential GTPase which binds GTP, GDP and possibly (p)ppGpp with moderate affinity, with high nucleotide exchange rates and a fairly low GTP hydrolysis rate. Plays a role in control of the cell cycle, stress response, ribosome biogenesis and in those bacteria that undergo differentiation, in morphogenesis control. The protein is GTPase Obg of Stenotrophomonas maltophilia (strain K279a).